The following is an 81-amino-acid chain: Small ribosomal subunit protein bS16 (81 aa).

This sequence belongs to the bacterial ribosomal protein bS16 family.

This is Small ribosomal subunit protein bS16 from Clostridium beijerinckii (strain ATCC 51743 / NCIMB 8052) (Clostridium acetobutylicum).